Consider the following 454-residue polypeptide: Tol-Pal system protein TolB (454 aa).

A signal peptide spans 1-30 (MNDARSITRRRFMTLTGSGLAMLGGGHAFA).

It belongs to the TolB family. In terms of assembly, the Tol-Pal system is composed of five core proteins: the inner membrane proteins TolA, TolQ and TolR, the periplasmic protein TolB and the outer membrane protein Pal. They form a network linking the inner and outer membranes and the peptidoglycan layer.

The protein localises to the periplasm. Functionally, part of the Tol-Pal system, which plays a role in outer membrane invagination during cell division and is important for maintaining outer membrane integrity. This is Tol-Pal system protein TolB from Bradyrhizobium diazoefficiens (strain JCM 10833 / BCRC 13528 / IAM 13628 / NBRC 14792 / USDA 110).